The sequence spans 275 residues: NADPH-dependent 7-cyano-7-deazaguanine reductase (275 aa).

81-83 contributes to the substrate binding site; sequence VES. An NADPH-binding site is contributed by 83–84; sequence SK. Cys-182 functions as the Thioimide intermediate in the catalytic mechanism. The active-site Proton donor is Asp-189. A substrate-binding site is contributed by 221-222; that stretch reads HE. 250-251 is a binding site for NADPH; sequence RG.

This sequence belongs to the GTP cyclohydrolase I family. QueF type 2 subfamily. In terms of assembly, homodimer.

The protein localises to the cytoplasm. The catalysed reaction is 7-aminomethyl-7-carbaguanine + 2 NADP(+) = 7-cyano-7-deazaguanine + 2 NADPH + 3 H(+). Its pathway is tRNA modification; tRNA-queuosine biosynthesis. Catalyzes the NADPH-dependent reduction of 7-cyano-7-deazaguanine (preQ0) to 7-aminomethyl-7-deazaguanine (preQ1). The polypeptide is NADPH-dependent 7-cyano-7-deazaguanine reductase (Polaromonas sp. (strain JS666 / ATCC BAA-500)).